Consider the following 242-residue polypeptide: Zinc import ATP-binding protein ZnuC (242 aa).

Residues 24-241 enclose the ABC transporter domain; that stretch reads INVKNLSFFY…EKFLKMFSSY (218 aa). Residue 56–63 participates in ATP binding; the sequence is GPNGGGKT.

This sequence belongs to the ABC transporter superfamily. Zinc importer (TC 3.A.1.15.5) family. As to quaternary structure, the complex is composed of two ATP-binding proteins (ZnuC), two transmembrane proteins (ZnuB) and a solute-binding protein (ZnuA).

Its subcellular location is the cell inner membrane. The enzyme catalyses Zn(2+)(out) + ATP(in) + H2O(in) = Zn(2+)(in) + ADP(in) + phosphate(in) + H(+)(in). In terms of biological role, part of the ABC transporter complex ZnuABC involved in zinc import. Responsible for energy coupling to the transport system. The sequence is that of Zinc import ATP-binding protein ZnuC from Ehrlichia canis (strain Jake).